Here is a 181-residue protein sequence, read N- to C-terminus: Oligoribonuclease (181 aa).

Positions 8–171 (LIWIDLEMTG…DDIRESVAEL (164 aa)) constitute an Exonuclease domain. The active site involves Y129.

It belongs to the oligoribonuclease family.

It is found in the cytoplasm. In terms of biological role, 3'-to-5' exoribonuclease specific for small oligoribonucleotides. The sequence is that of Oligoribonuclease from Salmonella choleraesuis (strain SC-B67).